The sequence spans 335 residues: 3-hydroxy-3-methylglutaryl-CoA lyase, cytoplasmic (335 aa).

The N-myristoyl glycine moiety is linked to residue Gly2. The Pyruvate carboxyltransferase domain occupies Val43–Met310. Residue Arg51 participates in substrate binding. Asp52 is a binding site for a divalent metal cation. Lys58 is modified (N6-acetyllysine). 2 residues coordinate a divalent metal cation: His243 and His245. Residue Cys276 is part of the active site. An a divalent metal cation-binding site is contributed by Asn285.

This sequence belongs to the HMG-CoA lyase family. Requires a divalent metal cation as cofactor.

The protein resides in the cytoplasm. It is found in the cytosol. The protein localises to the endoplasmic reticulum membrane. It carries out the reaction (3S)-3-hydroxy-3-methylglutaryl-CoA = acetoacetate + acetyl-CoA. It participates in metabolic intermediate metabolism; (S)-3-hydroxy-3-methylglutaryl-CoA degradation; acetoacetate from (S)-3-hydroxy-3-methylglutaryl-CoA: step 1/1. Its function is as follows. Non-mitochondrial 3-hydroxy-3-methylglutaryl-CoA lyase that catalyzes a cation-dependent cleavage of (S)-3-hydroxy-3-methylglutaryl-CoA into acetyl-CoA and acetoacetate, a key step in ketogenesis, the products of which support energy production in nonhepatic animal tissues. This Danio rerio (Zebrafish) protein is 3-hydroxy-3-methylglutaryl-CoA lyase, cytoplasmic (hmgcll1).